Reading from the N-terminus, the 715-residue chain is Poly(A) polymerase alpha-A (715 aa).

ATP contacts are provided by residues F82 to P84, T91, D95 to D97, D149, K210, Y219, and G228 to V229. Mg(2+) is bound by residues D95, D97, and D149. The short motif at R472 to K489 is the Nuclear localization signal 1 element. Disordered stretches follow at residues D510–P543, Q560–P590, and K607–D693. 2 stretches are compositionally biased toward polar residues: residues M515 to S539 and Q560 to P588. The Nuclear localization signal 2 signature appears at K624–K639. Over residues D655–S673 the composition is skewed to basic and acidic residues. Polar residues predominate over residues S674–S692.

The protein belongs to the poly(A) polymerase family. Monomer. Requires Mg(2+) as cofactor. It depends on Mn(2+) as a cofactor.

The protein localises to the nucleus. It catalyses the reaction RNA(n) + ATP = RNA(n)-3'-adenine ribonucleotide + diphosphate. In terms of biological role, polymerase that creates the 3'-poly(A) tail of mRNA's. May acquire specificity through interaction with a cleavage and polyadenylation factor (CPSF). The chain is Poly(A) polymerase alpha-A (papola-a) from Xenopus laevis (African clawed frog).